A 380-amino-acid chain; its full sequence is Cytochrome b (380 aa).

The next 4 membrane-spanning stretches (helical) occupy residues 34 to 54 (FGSL…LLAT), 78 to 99 (WLIR…YLHI), 114 to 134 (WNTG…GYVL), and 179 to 199 (FFAL…IHLT). Residues His84 and His98 each contribute to the heme b site. Heme b contacts are provided by His183 and His197. A ubiquinone is bound at residue His202. The next 4 membrane-spanning stretches (helical) occupy residues 227 to 247 (LKDI…ALFS), 289 to 309 (LGGV…PFLH), 321 to 341 (ISQL…WIGS), and 348 to 368 (FIII…ALFP).

This sequence belongs to the cytochrome b family. In terms of assembly, the cytochrome bc1 complex contains 11 subunits: 3 respiratory subunits (MT-CYB, CYC1 and UQCRFS1), 2 core proteins (UQCRC1 and UQCRC2) and 6 low-molecular weight proteins (UQCRH/QCR6, UQCRB/QCR7, UQCRQ/QCR8, UQCR10/QCR9, UQCR11/QCR10 and a cleavage product of UQCRFS1). This cytochrome bc1 complex then forms a dimer. Requires heme b as cofactor.

It localises to the mitochondrion inner membrane. Functionally, component of the ubiquinol-cytochrome c reductase complex (complex III or cytochrome b-c1 complex) that is part of the mitochondrial respiratory chain. The b-c1 complex mediates electron transfer from ubiquinol to cytochrome c. Contributes to the generation of a proton gradient across the mitochondrial membrane that is then used for ATP synthesis. The chain is Cytochrome b (MT-CYB) from Buteo buteo (Eurasian buzzard).